The chain runs to 146 residues: D-aminoacyl-tRNA deacylase (146 aa).

The short motif at 137–138 (GP) is the Gly-cisPro motif, important for rejection of L-amino acids element.

It belongs to the DTD family. As to quaternary structure, homodimer.

The protein resides in the cytoplasm. The catalysed reaction is glycyl-tRNA(Ala) + H2O = tRNA(Ala) + glycine + H(+). It carries out the reaction a D-aminoacyl-tRNA + H2O = a tRNA + a D-alpha-amino acid + H(+). In terms of biological role, an aminoacyl-tRNA editing enzyme that deacylates mischarged D-aminoacyl-tRNAs. Also deacylates mischarged glycyl-tRNA(Ala), protecting cells against glycine mischarging by AlaRS. Acts via tRNA-based rather than protein-based catalysis; rejects L-amino acids rather than detecting D-amino acids in the active site. By recycling D-aminoacyl-tRNA to D-amino acids and free tRNA molecules, this enzyme counteracts the toxicity associated with the formation of D-aminoacyl-tRNA entities in vivo and helps enforce protein L-homochirality. The chain is D-aminoacyl-tRNA deacylase from Acinetobacter baylyi (strain ATCC 33305 / BD413 / ADP1).